A 368-amino-acid polypeptide reads, in one-letter code: Probable dual-specificity RNA methyltransferase RlmN (368 aa).

The Proton acceptor role is filled by glutamate 108. The Radical SAM core domain occupies 114–345 (HAYGNSVCVS…VTVRRGLGAD (232 aa)). Cysteine 121 and cysteine 350 are oxidised to a cystine. Cysteine 128, cysteine 132, and cysteine 135 together coordinate [4Fe-4S] cluster. S-adenosyl-L-methionine-binding positions include 175 to 176 (GE), serine 207, 230 to 232 (SLH), and asparagine 307. Catalysis depends on cysteine 350, which acts as the S-methylcysteine intermediate.

This sequence belongs to the radical SAM superfamily. RlmN family. The cofactor is [4Fe-4S] cluster.

It localises to the cytoplasm. The catalysed reaction is adenosine(2503) in 23S rRNA + 2 reduced [2Fe-2S]-[ferredoxin] + 2 S-adenosyl-L-methionine = 2-methyladenosine(2503) in 23S rRNA + 5'-deoxyadenosine + L-methionine + 2 oxidized [2Fe-2S]-[ferredoxin] + S-adenosyl-L-homocysteine. It carries out the reaction adenosine(37) in tRNA + 2 reduced [2Fe-2S]-[ferredoxin] + 2 S-adenosyl-L-methionine = 2-methyladenosine(37) in tRNA + 5'-deoxyadenosine + L-methionine + 2 oxidized [2Fe-2S]-[ferredoxin] + S-adenosyl-L-homocysteine. Its function is as follows. Specifically methylates position 2 of adenine 2503 in 23S rRNA and position 2 of adenine 37 in tRNAs. The protein is Probable dual-specificity RNA methyltransferase RlmN of Pelotomaculum thermopropionicum (strain DSM 13744 / JCM 10971 / SI).